Reading from the N-terminus, the 213-residue chain is Mite allergen Der f 7 (213 aa).

The first 17 residues, 1 to 17 (MMKFLLIAAVAFVAVSA), serve as a signal peptide directing secretion. A glycan (N-linked (GlcNAc...) asparagine) is linked at asparagine 151.

Belongs to the mite group 7 allergen family.

The protein localises to the secreted. This chain is Mite allergen Der f 7 (DERF7), found in Dermatophagoides farinae (American house dust mite).